Reading from the N-terminus, the 1094-residue chain is RecBCD enzyme subunit RecB (1094 aa).

Residues 1-326 (MDRFELLGPL…YTLGVNWRSD (326 aa)) form the UvrD-like helicase ATP-binding domain. The segment at 1–713 (MDRFELLGPL…LLRGRRPGQS (713 aa)) is DNA-binding and helicase activity, interacts with RecC. 21–28 (ASAGTGKT) contacts ATP. In terms of domain architecture, UvrD-like helicase C-terminal spans 357–613 (AGHRLASAPR…QIMTVFVAKG (257 aa)). The tract at residues 775–1094 (TWRRTSYSDL…DLLDRGRLQS (320 aa)) is nuclease activity, interacts with RecD and RecA. Mg(2+)-binding residues include histidine 838, aspartate 975, and aspartate 989. The For nuclease activity role is filled by aspartate 989.

Belongs to the helicase family. UvrD subfamily. As to quaternary structure, heterotrimer of RecB, RecC and RecD. All subunits contribute to DNA-binding. Interacts with RecA. It depends on Mg(2+) as a cofactor.

It carries out the reaction Exonucleolytic cleavage (in the presence of ATP) in either 5'- to 3'- or 3'- to 5'-direction to yield 5'-phosphooligonucleotides.. It catalyses the reaction Couples ATP hydrolysis with the unwinding of duplex DNA by translocating in the 3'-5' direction.. The catalysed reaction is ATP + H2O = ADP + phosphate + H(+). A helicase/nuclease that prepares dsDNA breaks (DSB) for recombinational DNA repair. Binds to DSBs and unwinds DNA via a highly rapid and processive ATP-dependent bidirectional helicase activity. In the holoenzyme this subunit contributes ATPase, 3'-5' helicase, exonuclease activity and loads RecA onto ssDNA. Unlike the case in E.coli, suppresses RecA-dependent homologous recombination, is instead required for single-strand annealing pathway repair of DSB. This chain is RecBCD enzyme subunit RecB, found in Mycobacterium tuberculosis (strain CDC 1551 / Oshkosh).